Reading from the N-terminus, the 412-residue chain is Tryptophan synthase beta chain (412 aa).

An N6-(pyridoxal phosphate)lysine modification is found at K92.

Belongs to the TrpB family. As to quaternary structure, tetramer of two alpha and two beta chains. Pyridoxal 5'-phosphate is required as a cofactor.

The enzyme catalyses (1S,2R)-1-C-(indol-3-yl)glycerol 3-phosphate + L-serine = D-glyceraldehyde 3-phosphate + L-tryptophan + H2O. The protein operates within amino-acid biosynthesis; L-tryptophan biosynthesis; L-tryptophan from chorismate: step 5/5. The beta subunit is responsible for the synthesis of L-tryptophan from indole and L-serine. This is Tryptophan synthase beta chain from Methylibium petroleiphilum (strain ATCC BAA-1232 / LMG 22953 / PM1).